The primary structure comprises 162 residues: Large ribosomal subunit protein bL9 (162 aa).

This sequence belongs to the bacterial ribosomal protein bL9 family.

Functionally, binds to the 23S rRNA. This Chlorobaculum parvum (strain DSM 263 / NCIMB 8327) (Chlorobium vibrioforme subsp. thiosulfatophilum) protein is Large ribosomal subunit protein bL9.